We begin with the raw amino-acid sequence, 206 residues long: Urease accessory protein UreG (206 aa).

Residue 11–18 (GPVGSGKT) coordinates GTP.

It belongs to the SIMIBI class G3E GTPase family. UreG subfamily. In terms of assembly, homodimer. UreD, UreF and UreG form a complex that acts as a GTP-hydrolysis-dependent molecular chaperone, activating the urease apoprotein by helping to assemble the nickel containing metallocenter of UreC. The UreE protein probably delivers the nickel.

It localises to the cytoplasm. Functionally, facilitates the functional incorporation of the urease nickel metallocenter. This process requires GTP hydrolysis, probably effectuated by UreG. In Mycolicibacterium gilvum (strain PYR-GCK) (Mycobacterium gilvum (strain PYR-GCK)), this protein is Urease accessory protein UreG.